A 132-amino-acid polypeptide reads, in one-letter code: Small ribosomal subunit protein uS8 (132 aa).

Belongs to the universal ribosomal protein uS8 family. Part of the 30S ribosomal subunit. Contacts proteins S5 and S12.

One of the primary rRNA binding proteins, it binds directly to 16S rRNA central domain where it helps coordinate assembly of the platform of the 30S subunit. The protein is Small ribosomal subunit protein uS8 of Staphylococcus haemolyticus (strain JCSC1435).